A 326-amino-acid chain; its full sequence is Diphthine methyltransferase (326 aa).

4 WD repeats span residues 65-105, 113-152, 155-195, and 293-326; these read MHCD…ELMF, DSSV…IKNK, EHDY…SCIW, and EHES…WEDI.

It belongs to the DPH7 family.

It localises to the cytoplasm. The protein resides in the nucleus. The catalysed reaction is diphthine methyl ester-[translation elongation factor 2] + H2O = diphthine-[translation elongation factor 2] + methanol + H(+). It participates in protein modification; peptidyl-diphthamide biosynthesis. Its function is as follows. Catalyzes the demethylation of diphthine methyl ester to form diphthine, an intermediate in diphthamide biosynthesis, a post-translational modification of histidine which occurs in translation elongation factor 2 (eft201 and eft202). The sequence is that of Diphthine methyltransferase (rrt2) from Schizosaccharomyces pombe (strain 972 / ATCC 24843) (Fission yeast).